The chain runs to 313 residues: tRNA-cytidine(32) 2-sulfurtransferase (313 aa).

Residues 46–51 (SGGKDS) carry the PP-loop motif motif. Cys121, Cys124, and Cys212 together coordinate [4Fe-4S] cluster.

Belongs to the TtcA family. As to quaternary structure, homodimer. It depends on Mg(2+) as a cofactor. Requires [4Fe-4S] cluster as cofactor.

Its subcellular location is the cytoplasm. The catalysed reaction is cytidine(32) in tRNA + S-sulfanyl-L-cysteinyl-[cysteine desulfurase] + AH2 + ATP = 2-thiocytidine(32) in tRNA + L-cysteinyl-[cysteine desulfurase] + A + AMP + diphosphate + H(+). Its pathway is tRNA modification. Its function is as follows. Catalyzes the ATP-dependent 2-thiolation of cytidine in position 32 of tRNA, to form 2-thiocytidine (s(2)C32). The sulfur atoms are provided by the cysteine/cysteine desulfurase (IscS) system. The sequence is that of tRNA-cytidine(32) 2-sulfurtransferase from Nitrosomonas eutropha (strain DSM 101675 / C91 / Nm57).